A 460-amino-acid chain; its full sequence is tRNA (guanine(37)-N(1))-methyltransferase (460 aa).

Residues histidine 204, 243-244, 271-272, and asparagine 292 contribute to the S-adenosyl-L-methionine site; these read DL and DA. The span at 390-428 shows a compositional bias: low complexity; that stretch reads ASTTTTPTTSNTNTSTTTSTTSTSTTTTESTNTNNSANN. A disordered region spans residues 390 to 460; the sequence is ASTTTTPTTS…SIDTNKKLKN (71 aa). Over residues 442 to 451 the composition is skewed to acidic residues; the sequence is DSNETNETDS.

The protein belongs to the class I-like SAM-binding methyltransferase superfamily. TRM5/TYW2 family. Monomer.

The protein resides in the mitochondrion matrix. It is found in the nucleus. It localises to the cytoplasm. It catalyses the reaction guanosine(37) in tRNA + S-adenosyl-L-methionine = N(1)-methylguanosine(37) in tRNA + S-adenosyl-L-homocysteine + H(+). Specifically methylates the N1 position of guanosine-37 in various cytoplasmic and mitochondrial tRNAs. Methylation is not dependent on the nature of the nucleoside 5' of the target nucleoside. This is the first step in the biosynthesis of wybutosine (yW), a modified base adjacent to the anticodon of tRNAs and required for accurate decoding. The sequence is that of tRNA (guanine(37)-N(1))-methyltransferase (trmt5) from Dictyostelium discoideum (Social amoeba).